A 439-amino-acid chain; its full sequence is Forkhead box protein J1-B (439 aa).

Positions 124-218 (KPPYSYATLI…MNGAMKKRRL (95 aa)) form a DNA-binding region, fork-head.

Belongs to the FOXJ1 family.

The protein localises to the nucleus. Functionally, key transcription factor required for motile ciliogenesis. Activates genes essential for motile cilia formation and function. In Xenopus laevis (African clawed frog), this protein is Forkhead box protein J1-B (foxj1-b).